Consider the following 1396-residue polypeptide: ATP-dependent helicase/nuclease subunit A (1396 aa).

The interval 1–25 (MNREALCHDDPIGHDRLRPDSIPRD) is disordered. In terms of domain architecture, UvrD-like helicase ATP-binding spans 26 to 532 (PKWTDEQWQA…IDLAKNFRSR (507 aa)). 47 to 54 (AAAGAGKT) is a binding site for ATP. 2 disordered regions span residues 590 to 649 (DADG…GQPT) and 1171 to 1205 (HSPE…PSPD). The 306-residue stretch at 615–920 (HKNIAKAGES…RIMSIHKSKG (306 aa)) folds into the UvrD-like helicase C-terminal domain. Low complexity predominate over residues 1181–1199 (TPPSLEIPPSLETPPSLET).

The protein belongs to the helicase family. AddA subfamily. Heterodimer of AddA and AddB/RexB. Mg(2+) is required as a cofactor.

It catalyses the reaction Couples ATP hydrolysis with the unwinding of duplex DNA by translocating in the 3'-5' direction.. It carries out the reaction ATP + H2O = ADP + phosphate + H(+). Its function is as follows. The heterodimer acts as both an ATP-dependent DNA helicase and an ATP-dependent, dual-direction single-stranded exonuclease. Recognizes the chi site generating a DNA molecule suitable for the initiation of homologous recombination. The AddA nuclease domain is required for chi fragment generation; this subunit has the helicase and 3' -&gt; 5' nuclease activities. The protein is ATP-dependent helicase/nuclease subunit A of Heliobacterium modesticaldum (strain ATCC 51547 / Ice1).